We begin with the raw amino-acid sequence, 192 residues long: Imidazole glycerol phosphate synthase subunit HisH (192 aa).

The 192-residue stretch at 1–192 folds into the Glutamine amidotransferase type-1 domain; it reads MIAIIDYGLG…QALKGGFIND (192 aa). The active-site Nucleophile is Cys77. Catalysis depends on residues His169 and Glu171.

Heterodimer of HisH and HisF.

The protein resides in the cytoplasm. The catalysed reaction is 5-[(5-phospho-1-deoxy-D-ribulos-1-ylimino)methylamino]-1-(5-phospho-beta-D-ribosyl)imidazole-4-carboxamide + L-glutamine = D-erythro-1-(imidazol-4-yl)glycerol 3-phosphate + 5-amino-1-(5-phospho-beta-D-ribosyl)imidazole-4-carboxamide + L-glutamate + H(+). It carries out the reaction L-glutamine + H2O = L-glutamate + NH4(+). The protein operates within amino-acid biosynthesis; L-histidine biosynthesis; L-histidine from 5-phospho-alpha-D-ribose 1-diphosphate: step 5/9. IGPS catalyzes the conversion of PRFAR and glutamine to IGP, AICAR and glutamate. The HisH subunit catalyzes the hydrolysis of glutamine to glutamate and ammonia as part of the synthesis of IGP and AICAR. The resulting ammonia molecule is channeled to the active site of HisF. The chain is Imidazole glycerol phosphate synthase subunit HisH from Staphylococcus epidermidis (strain ATCC 12228 / FDA PCI 1200).